The sequence spans 946 residues: Clumping factor A (946 aa).

A signal peptide spans 1-39 (MNMKKKEKHAIRKKSIGVASVLVGTLIGFGLLSSKEADA). The YSIRK-G/S signaling motif motif lies at 9–20 (HAIRKKSIGVAS). Disordered stretches follow at residues 34–199 (SKEA…SNKD) and 528–917 (FNNG…SEDE). The interval 40-542 (SENSVTQSDS…GSGDGIDKPV (503 aa)) is ligand binding A region. Positions 47 to 65 (SDSASNESKSNDSSSVSAA) are enriched in low complexity. Polar residues predominate over residues 71 to 111 (TNVSDTKTSSNTNNGETSVAQNPAQQETTQSALTNATTEET). Composition is skewed to low complexity over residues 117-131 (ATTATNQANTPATTQ) and 142-161 (NQTSNETTSNDTNTVSSVNS). A compositionally biased stretch (polar residues) spans 162–199 (PQNSTNAENVSTTQDTSTEATPSNNESAPQSTDASNKD). The span at 546-564 (QPDEPGEIEPIPEDSDSDP) shows a compositional bias: acidic residues. The span at 565–597 (GSDSGSDSNSDSGSDSGSDSTSDSGSDSASDSD) shows a compositional bias: low complexity. Over residues 598–874 (SASDSDSASD…DSDSESDSNS (277 aa)) the composition is skewed to acidic residues. Over residues 875–893 (DSESGSNNNVVPPNSPKNG) the composition is skewed to low complexity. A compositionally biased stretch (basic and acidic residues) spans 900–909 (NEAKDSKEPL). Residues 909 to 913 (LPDTG) carry the LPXTG sorting signal motif. Pentaglycyl murein peptidoglycan amidated threonine is present on Thr912. Residues 913–946 (GSEDEANTSLIWGLLASIGSLLLFRRKKENKDKK) constitute a propeptide, removed by sortase.

The protein belongs to the serine-aspartate repeat-containing protein (SDr) family.

The protein localises to the secreted. Its subcellular location is the cell wall. In terms of biological role, cell surface-associated protein implicated in virulence. Promotes bacterial attachment exclusively to the gamma-chain of human fibrinogen. Induces formation of bacterial clumps. This Staphylococcus aureus (strain MW2) protein is Clumping factor A (clfA).